The sequence spans 254 residues: Dihydroorotate dehydrogenase B (NAD(+)), electron transfer subunit (254 aa).

The 99-residue stretch at 1 to 99 (MLQTEMKVIQ…LGPLGKGFDI (99 aa)) folds into the FAD-binding FR-type domain. FAD contacts are provided by residues 50–53 (RPIS), 67–69 (LYR), and 74–75 (GT). [2Fe-2S] cluster contacts are provided by cysteine 218, cysteine 223, cysteine 226, and cysteine 241.

The protein belongs to the PyrK family. Heterotetramer of 2 PyrK and 2 PyrD type B subunits. The cofactor is [2Fe-2S] cluster. FAD serves as cofactor.

It participates in pyrimidine metabolism; UMP biosynthesis via de novo pathway; orotate from (S)-dihydroorotate (NAD(+) route): step 1/1. Functionally, responsible for channeling the electrons from the oxidation of dihydroorotate from the FMN redox center in the PyrD type B subunit to the ultimate electron acceptor NAD(+). The chain is Dihydroorotate dehydrogenase B (NAD(+)), electron transfer subunit from Listeria welshimeri serovar 6b (strain ATCC 35897 / DSM 20650 / CCUG 15529 / CIP 8149 / NCTC 11857 / SLCC 5334 / V8).